The chain runs to 137 residues: Large ribosomal subunit protein uL16 (137 aa).

This sequence belongs to the universal ribosomal protein uL16 family. In terms of assembly, part of the 50S ribosomal subunit.

Functionally, binds 23S rRNA and is also seen to make contacts with the A and possibly P site tRNAs. The sequence is that of Large ribosomal subunit protein uL16 from Maricaulis maris (strain MCS10) (Caulobacter maris).